A 199-amino-acid chain; its full sequence is Securin (199 aa).

2 disordered regions span residues 1-23 (MATL…SKDG) and 58-108 (RKAL…DDAY). A2 bears the N-acetylalanine mark. Over residues 7 to 23 (VDKDNEEPGSRLASKDG) the composition is skewed to basic and acidic residues. Positions 58–61 (RKAL) match the D-box motif. Positions 68-70 (TEK) match the TEK-box 1 motif. Positions 76-85 (KPLQSKQPTL) are enriched in polar residues. The TEK-box 2 signature appears at 91–93 (TEK). Residue S162 is modified to Phosphoserine. The SH3-binding motif lies at 179–192 (PPSALSALDVELPP).

It belongs to the securin family. As to quaternary structure, interacts with the caspase-like ESPL1, and prevents its protease activity by covering its active site. Interacts with p53/TP53 and blocks its activity probably by blocking its binding to DNA. Interacts with the Ku 70 kDa subunit of ds-DNA kinase. Interacts with PTTG1IP. Interacts with RPS10 and DNAJA1. In terms of processing, phosphorylated at Ser-162 by CDK1 during mitosis. Phosphorylated in vitro by ds-DNA kinase. Post-translationally, ubiquitinated through 'Lys-11' linkage of ubiquitin moieties by the anaphase promoting complex (APC) at the onset of anaphase, conducting to its degradation. 'Lys-11'-linked ubiquitination is mediated by the E2 ligase UBE2C/UBCH10. Expressed at low level in most tissues, except in adult testis, where it is highly expressed. Expressed in both spermatocytes and spermatids.

The protein resides in the cytoplasm. It is found in the nucleus. In terms of biological role, regulatory protein, which plays a central role in chromosome stability, in the p53/TP53 pathway, and DNA repair. Probably acts by blocking the action of key proteins. During the mitosis, it blocks Separase/ESPL1 function, preventing the proteolysis of the cohesin complex and the subsequent segregation of the chromosomes. At the onset of anaphase, it is ubiquitinated, conducting to its destruction and to the liberation of ESPL1. Its function is however not limited to a blocking activity, since it is required to activate ESPL1. Negatively regulates the transcriptional activity and related apoptosis activity of p53/TP53. The negative regulation of p53/TP53 may explain the strong transforming capability of the protein when it is overexpressed. May also play a role in DNA repair via its interaction with Ku, possibly by connecting DNA damage-response pathways with sister chromatid separation. This is Securin (Pttg1) from Rattus norvegicus (Rat).